The primary structure comprises 142 residues: Secreted RxLR effector protein 161 (142 aa).

Residues 1–27 (MKNVPYLSAVGAIMYLMVVTRPDLAAA) form the signal peptide. A RxLR motif is present at residues 48 to 51 (RVLR).

Belongs to the RxLR effector family.

The protein localises to the secreted. It localises to the host chloroplast envelope. The protein resides in the host nucleus. Secreted effector that completely suppresses the host cell death induced by cell death-inducing proteins. The sequence is that of Secreted RxLR effector protein 161 from Plasmopara viticola (Downy mildew of grapevine).